The sequence spans 186 residues: Lipid A palmitoyltransferase PagP (186 aa).

The first 25 residues, 1–25 (MNVSKYVAIFSFVFIQLISVGKVFA), serve as a signal peptide directing secretion. Catalysis depends on residues histidine 58, aspartate 101, and serine 102.

The protein belongs to the lipid A palmitoyltransferase family. Homodimer.

It is found in the cell outer membrane. The enzyme catalyses lipid A (E. coli) + a 1-hexadecanoyl-2-acyl-sn-glycero-3-phosphocholine = hepta-acyl lipid A (E. coli) + a 2-acyl-sn-glycero-3-phosphocholine. The catalysed reaction is lipid IIA + a 1-hexadecanoyl-2-acyl-sn-glycero-3-phosphocholine = lipid IIB + a 2-acyl-sn-glycero-3-phosphocholine. It catalyses the reaction lipid IVA (E. coli) + a 1-hexadecanoyl-2-acyl-sn-glycero-3-phosphocholine = lipid IVB (E. coli) + a 2-acyl-sn-glycero-3-phosphocholine. Its activity is regulated as follows. Inhibited by lauryldimethylamine oxide (LDAO) and dodecylphosphocholine (DPC). Transfers a palmitate residue from the sn-1 position of a phospholipid to the N-linked hydroxymyristate on the proximal unit of lipid A or its precursors. Phosphatidylglycerol (PtdGro), phosphatidylethanolamine (PtdEtn), phosphatidylserine (PtdSer) and phosphatidic acid (Ptd-OH) are all effective acyl donors. The chain is Lipid A palmitoyltransferase PagP from Escherichia coli (strain K12).